The sequence spans 439 residues: CBL-interacting serine/threonine-protein kinase 26 (439 aa).

The Protein kinase domain occupies 13 to 268 (YEVGKTLGQG…IPEVLGDAWF (256 aa)). ATP is bound by residues 19–27 (LGQGTFAKV) and lysine 42. Catalysis depends on aspartate 136, which acts as the Proton acceptor. Residues 154–183 (DFGLSALSRQVRGDGLLHTACGTPNYAAPE) form an activation loop region. Serine 158 is modified (phosphoserine). Threonine 172 carries the post-translational modification Phosphothreonine. The NAF domain occupies 306–330 (EQPTSMNAFELISMSRALDLGNLFE). A PPI region spans residues 336–365 (KRETRFAAKGAANDLVQKIEEASKPLGFDI).

Belongs to the protein kinase superfamily. CAMK Ser/Thr protein kinase family. SNF1 subfamily. In terms of assembly, interacts with RBOHF (via N-terminus). The cofactor is Mn(2+).

It localises to the cell membrane. It carries out the reaction L-seryl-[protein] + ATP = O-phospho-L-seryl-[protein] + ADP + H(+). The catalysed reaction is L-threonyl-[protein] + ATP = O-phospho-L-threonyl-[protein] + ADP + H(+). Its function is as follows. CIPK serine-threonine protein kinases interact with CBL proteins. Binding of a CBL protein to the regulatory NAF domain of CIPK protein lead to the activation of the kinase in a calcium-dependent manner. Involved in the calcium-dependent regulation of reactive oxygen species production by the NADPH oxidase RBOHF. This chain is CBL-interacting serine/threonine-protein kinase 26 (CIPK26), found in Arabidopsis thaliana (Mouse-ear cress).